A 443-amino-acid polypeptide reads, in one-letter code: Na(+)-translocating ferredoxin:NAD(+) oxidoreductase complex subunit C (443 aa).

4Fe-4S ferredoxin-type domains lie at 359 to 391 (ESAK…IAEY) and 398 to 428 (DKCE…VSSI). C369, C372, C375, C379, C408, C411, C414, and C418 together coordinate [4Fe-4S] cluster.

This sequence belongs to the 4Fe4S bacterial-type ferredoxin family. RnfC subfamily. In terms of assembly, the complex is composed of six subunits: RnfA, RnfB, RnfC, RnfD, RnfE and RnfG. [4Fe-4S] cluster is required as a cofactor.

The protein localises to the cell membrane. It carries out the reaction 2 reduced [2Fe-2S]-[ferredoxin] + Na(+)(in) + NAD(+) + H(+) = 2 oxidized [2Fe-2S]-[ferredoxin] + Na(+)(out) + NADH. In terms of biological role, part of a membrane-bound complex that couples electron transfer with translocation of ions across the membrane. Couples electron transfer from reduced ferredoxin to NAD(+) with electrogenic movement of Na(+) out of the cell. Involved in caffeate respiration. This Acetobacterium woodii (strain ATCC 29683 / DSM 1030 / JCM 2381 / KCTC 1655 / WB1) protein is Na(+)-translocating ferredoxin:NAD(+) oxidoreductase complex subunit C.